Reading from the N-terminus, the 1136-residue chain is Nuclear pore complex protein Nup133 (1136 aa).

The interval 1 to 26 (MFSPRGTPGSGRRQAPRTGGRRSVSA) is disordered.

It belongs to the nucleoporin Nup133 family. In terms of assembly, forms part of the Nup160 subcomplex in the nuclear pore which is composed of NUP160, NUP133, NUP107 and Nup96. This complex plays a role in RNA export and in tethering Nup98 and NUP153 to the nucleus. In terms of tissue distribution, widely expressed in the embryo and in adult tissues. Higher expression is observed in the brain, testes, ovary, skin, and kidney.

The protein localises to the nucleus. It is found in the nuclear pore complex. It localises to the chromosome. The protein resides in the centromere. Its subcellular location is the kinetochore. Functionally, involved in poly(A)+ RNA transport. Involved in nephrogenesis. The polypeptide is Nuclear pore complex protein Nup133 (Danio rerio (Zebrafish)).